Here is a 225-residue protein sequence, read N- to C-terminus: Imidazole glycerol phosphate synthase subunit HisH (225 aa).

Residues 5-220 (KNVIVDTGCA…LELDSTELNQ (216 aa)) enclose the Glutamine amidotransferase type-1 domain. Catalysis depends on Cys80, which acts as the Nucleophile. Active-site residues include His195 and Glu197.

As to quaternary structure, heterodimer of HisH and HisF.

The protein localises to the cytoplasm. It carries out the reaction 5-[(5-phospho-1-deoxy-D-ribulos-1-ylimino)methylamino]-1-(5-phospho-beta-D-ribosyl)imidazole-4-carboxamide + L-glutamine = D-erythro-1-(imidazol-4-yl)glycerol 3-phosphate + 5-amino-1-(5-phospho-beta-D-ribosyl)imidazole-4-carboxamide + L-glutamate + H(+). It catalyses the reaction L-glutamine + H2O = L-glutamate + NH4(+). The protein operates within amino-acid biosynthesis; L-histidine biosynthesis; L-histidine from 5-phospho-alpha-D-ribose 1-diphosphate: step 5/9. Its function is as follows. IGPS catalyzes the conversion of PRFAR and glutamine to IGP, AICAR and glutamate. The HisH subunit catalyzes the hydrolysis of glutamine to glutamate and ammonia as part of the synthesis of IGP and AICAR. The resulting ammonia molecule is channeled to the active site of HisF. This is Imidazole glycerol phosphate synthase subunit HisH from Colwellia psychrerythraea (strain 34H / ATCC BAA-681) (Vibrio psychroerythus).